Reading from the N-terminus, the 1070-residue chain is Carbamoyl phosphate synthase large chain (1070 aa).

The segment at 1 to 401 (MPKRDDIKTI…ALLKAVRSLE (401 aa)) is carboxyphosphate synthetic domain. Positions 129, 169, 175, 176, 208, 210, 215, 241, 242, 243, 284, and 298 each coordinate ATP. The ATP-grasp 1 domain occupies 133 to 327 (RDLMNELGEP…IAKLAAKIAV (195 aa)). The Mg(2+) site is built by Q284, E298, and N300. Positions 284, 298, and 300 each coordinate Mn(2+). Residues 402–546 (VGADHLLLEE…YSTYEEENES (145 aa)) are oligomerization domain. The tract at residues 547 to 929 (TRSAKESVIV…ALYKGFVASG (383 aa)) is carbamoyl phosphate synthetic domain. Residues 671–861 (EKALEILQIP…MANVATRVIL (191 aa)) enclose the ATP-grasp 2 domain. 10 residues coordinate ATP: R707, R746, V748, E752, G777, V778, H779, S780, Q820, and E832. Mg(2+) is bound by residues Q820, E832, and N834. 3 residues coordinate Mn(2+): Q820, E832, and N834. Residues 930 to 1070 (TTMHDYGTVL…SEVKQPKVRV (141 aa)) enclose the MGS-like domain. Residues 930–1070 (TTMHDYGTVL…SEVKQPKVRV (141 aa)) are allosteric domain.

It belongs to the CarB family. In terms of assembly, composed of two chains; the small (or glutamine) chain promotes the hydrolysis of glutamine to ammonia, which is used by the large (or ammonia) chain to synthesize carbamoyl phosphate. Tetramer of heterodimers (alpha,beta)4. Mg(2+) serves as cofactor. The cofactor is Mn(2+).

It carries out the reaction hydrogencarbonate + L-glutamine + 2 ATP + H2O = carbamoyl phosphate + L-glutamate + 2 ADP + phosphate + 2 H(+). The enzyme catalyses hydrogencarbonate + NH4(+) + 2 ATP = carbamoyl phosphate + 2 ADP + phosphate + 2 H(+). Its pathway is amino-acid biosynthesis; L-arginine biosynthesis; carbamoyl phosphate from bicarbonate: step 1/1. It functions in the pathway pyrimidine metabolism; UMP biosynthesis via de novo pathway; (S)-dihydroorotate from bicarbonate: step 1/3. Large subunit of the glutamine-dependent carbamoyl phosphate synthetase (CPSase). CPSase catalyzes the formation of carbamoyl phosphate from the ammonia moiety of glutamine, carbonate, and phosphate donated by ATP, constituting the first step of 2 biosynthetic pathways, one leading to arginine and/or urea and the other to pyrimidine nucleotides. The large subunit (synthetase) binds the substrates ammonia (free or transferred from glutamine from the small subunit), hydrogencarbonate and ATP and carries out an ATP-coupled ligase reaction, activating hydrogencarbonate by forming carboxy phosphate which reacts with ammonia to form carbamoyl phosphate. The sequence is that of Carbamoyl phosphate synthase large chain from Listeria welshimeri serovar 6b (strain ATCC 35897 / DSM 20650 / CCUG 15529 / CIP 8149 / NCTC 11857 / SLCC 5334 / V8).